The chain runs to 305 residues: Axin interactor, dorsalization-associated protein A (305 aa).

Positions 153–220 (GTLLPRLPSE…RKEDTYVHFN (68 aa)) are axin-binding. In terms of domain architecture, C2 Aida-type spans 156-303 (LPRLPSEPGM…LYLHLLQTLL (148 aa)).

The protein belongs to the AIDA family.

Functionally, acts as a ventralizing factor during embryogenesis. Inhibits axin-mediated JNK activation by binding axin and disrupting axin homodimerization. This in turn antagonizes a Wnt/beta-catenin-independent dorsalization pathway activated by axin/JNK-signaling. This is Axin interactor, dorsalization-associated protein A (aida-a) from Xenopus laevis (African clawed frog).